The sequence spans 271 residues: Putative hydro-lyase Mrad2831_3350 (271 aa).

It belongs to the D-glutamate cyclase family.

This Methylobacterium radiotolerans (strain ATCC 27329 / DSM 1819 / JCM 2831 / NBRC 15690 / NCIMB 10815 / 0-1) protein is Putative hydro-lyase Mrad2831_3350.